The chain runs to 462 residues: Sugar transporter ERD6-like 2 (462 aa).

Transmembrane regions (helical) follow at residues 23–43 (SGLL…GCAM), 70–90 (VMTL…ALVG), 96–116 (WISD…HDII), 123–143 (LFLG…IAEI), 156–176 (NQLL…FFHW), 178–198 (TLAL…FFIP), 261–281 (LIIG…AISA), 296–316 (IGTT…MLTV), 324–344 (LLMI…LSYY), 357–377 (VMLI…LGGL), 397–417 (LVTM…NFMI), and 423–443 (GTYF…WTLV).

This sequence belongs to the major facilitator superfamily. Sugar transporter (TC 2.A.1.1) family.

The protein localises to the membrane. Sugar transporter. This Arabidopsis thaliana (Mouse-ear cress) protein is Sugar transporter ERD6-like 2 (SUGTL3).